Reading from the N-terminus, the 142-residue chain is Hemoglobin subunit alpha-A (142 aa).

Residues 2–142 (VLSAADKGNV…VATVLTAKYR (141 aa)) form the Globin domain. Histidine 59 lines the O2 pocket. Histidine 88 provides a ligand contact to heme b.

Belongs to the globin family. In terms of assembly, heterotetramer of two alpha chains and two beta chains. In terms of tissue distribution, red blood cells.

Involved in oxygen transport from the lung to the various peripheral tissues. The chain is Hemoglobin subunit alpha-A (HBAA) from Anseranas semipalmata (Magpie goose).